The sequence spans 377 residues: Nitric oxide reductase FlRd-NAD(+) reductase (377 aa).

It belongs to the FAD-dependent oxidoreductase family. FAD is required as a cofactor.

Its subcellular location is the cytoplasm. It catalyses the reaction 2 reduced [nitric oxide reductase rubredoxin domain] + NAD(+) + H(+) = 2 oxidized [nitric oxide reductase rubredoxin domain] + NADH. The protein operates within nitrogen metabolism; nitric oxide reduction. One of at least two accessory proteins for anaerobic nitric oxide (NO) reductase. Reduces the rubredoxin moiety of NO reductase. The chain is Nitric oxide reductase FlRd-NAD(+) reductase from Klebsiella pneumoniae subsp. pneumoniae (strain ATCC 700721 / MGH 78578).